Consider the following 104-residue polypeptide: Large ribosomal subunit protein eL31 (104 aa).

Belongs to the eukaryotic ribosomal protein eL31 family.

This chain is Large ribosomal subunit protein eL31 (rpl31e), found in Aeropyrum pernix (strain ATCC 700893 / DSM 11879 / JCM 9820 / NBRC 100138 / K1).